We begin with the raw amino-acid sequence, 398 residues long: Gastric triacylglycerol lipase (398 aa).

An N-terminal signal peptide occupies residues Met1–Gly19. N-linked (GlcNAc...) asparagine glycans are attached at residues Asn34 and Asn99. The region spanning Pro78 to Trp377 is the AB hydrolase-1 domain. Catalysis depends on Ser172, which acts as the Nucleophile. An intrachain disulfide couples Cys246 to Cys255. 2 N-linked (GlcNAc...) asparagine glycosylation sites follow: Asn271 and Asn327. Active-site charge relay system residues include Asp343 and His372.

It belongs to the AB hydrolase superfamily. Lipase family.

The protein resides in the secreted. It carries out the reaction a triacylglycerol + H2O = a diacylglycerol + a fatty acid + H(+). The catalysed reaction is 1,2,3-tri-(9Z-octadecenoyl)-glycerol + H2O = 1,2-di-(9Z-octadecenoyl)-sn-glycerol + (9Z)-octadecenoate + H(+). The enzyme catalyses 1,2,3-trioctanoylglycerol + H2O = 1,2-dioctanoyl-sn-glycerol + octanoate + H(+). In terms of biological role, catalyzes the hydrolysis of triacylglycerols to yield free fatty acids, diacylglycerol, monoacylglycerol, and glycerol. Shows a preferential hydrolysis at the sn-3 position of triacylglycerol. The sequence is that of Gastric triacylglycerol lipase (LIPF) from Homo sapiens (Human).